We begin with the raw amino-acid sequence, 256 residues long: Zinc import ATP-binding protein ZnuC (256 aa).

The 216-residue stretch at I6–G221 folds into the ABC transporter domain. G38–S45 is an ATP binding site. A disordered region spans residues H237 to R256.

It belongs to the ABC transporter superfamily. Zinc importer (TC 3.A.1.15.5) family. As to quaternary structure, the complex is composed of two ATP-binding proteins (ZnuC), two transmembrane proteins (ZnuB) and a solute-binding protein (ZnuA).

The protein resides in the cell inner membrane. The enzyme catalyses Zn(2+)(out) + ATP(in) + H2O(in) = Zn(2+)(in) + ADP(in) + phosphate(in) + H(+)(in). In terms of biological role, part of the ABC transporter complex ZnuABC involved in zinc import. Responsible for energy coupling to the transport system. This chain is Zinc import ATP-binding protein ZnuC, found in Ruegeria pomeroyi (strain ATCC 700808 / DSM 15171 / DSS-3) (Silicibacter pomeroyi).